Here is a 1799-residue protein sequence, read N- to C-terminus: Putative neural-cadherin 2 (1799 aa).

9 N-linked (GlcNAc...) asparagine glycosylation sites follow: Asn13, Asn64, Asn86, Asn118, Asn195, Asn260, Asn264, Asn283, and Asn377. 7 Cadherin domains span residues 37 to 136, 137 to 252, 253 to 364, 368 to 485, 486 to 590, 590 to 709, and 708 to 812; these read DRFL…PPVF, DRQT…APQF, PQGI…PPQF, EWVT…VPKF, DREH…APTF, FAQD…QPGS, and GSKS…AGSM. Asn601, Asn793, Asn910, Asn948, and Asn969 each carry an N-linked (GlcNAc...) asparagine glycan. The EGF-like 1 domain occupies 973–1010; sequence QDHNCRTHLCYNGGRCVETRNGPKCVACPVGYNGPRCQ. Cystine bridges form between Cys977–Cys988, Cys982–Cys997, Cys1000–Cys1009, Cys1191–Cys1217, Cys1224–Cys1239, Cys1233–Cys1248, and Cys1250–Cys1259. One can recognise a Laminin G-like 1 domain in the interval 1011 to 1217; it reads QSTRSFRGNG…ALARNSFPAC (207 aa). Residues 1220-1260 form the EGF-like 2 domain; that stretch reads TDEVCLKTEHTARCWEHGNCVASLVQAKCHCQPGWMGPGCN. Residues 1263 to 1454 form the Laminin G-like 2 domain; the sequence is TIPTTFKAQS…TMARNLERNC (192 aa). Residues Asn1376 and Asn1437 are each glycosylated (N-linked (GlcNAc...) asparagine). 4 disulfide bridges follow: Cys1419–Cys1454, Cys1501–Cys1512, Cys1506–Cys1523, and Cys1525–Cys1534. Residues 1497-1535 form the EGF-like 3; calcium-binding domain; sequence DRNECLDLPCLNGATCINLEPRLRYRCICPEGYWGENCE. The helical transmembrane segment at 1549–1569 threads the bilayer; that stretch reads ALGAIFVCLIIILILALIFVL. Residues 1726–1799 are disordered; the sequence is ASSQLPSDGG…PLPEVDKVVL (74 aa). 3 stretches are compositionally biased toward gly residues: residues 1733 to 1744, 1752 to 1763, and 1775 to 1786; these read DGGGGSGDGPGP, LGGGGTGGGSGI, and SGAGPGGGGGSS.

The protein localises to the cell membrane. Its function is as follows. Cadherins are calcium-dependent cell adhesion proteins. They preferentially interact with themselves in a homophilic manner in connecting cells. This chain is Putative neural-cadherin 2 (CadN2), found in Drosophila melanogaster (Fruit fly).